A 130-amino-acid polypeptide reads, in one-letter code: Glycine cleavage system H protein (130 aa).

The region spanning I25 to R107 is the Lipoyl-binding domain. Position 66 is an N6-lipoyllysine (K66).

Belongs to the GcvH family. The glycine cleavage system is composed of four proteins: P, T, L and H. (R)-lipoate serves as cofactor.

The glycine cleavage system catalyzes the degradation of glycine. The H protein shuttles the methylamine group of glycine from the P protein to the T protein. The chain is Glycine cleavage system H protein from Trichormus variabilis (strain ATCC 29413 / PCC 7937) (Anabaena variabilis).